The sequence spans 300 residues: 4-hydroxy-tetrahydrodipicolinate synthase (300 aa).

Thr49 provides a ligand contact to pyruvate. Residue Tyr137 is the Proton donor/acceptor of the active site. Residue Lys166 is the Schiff-base intermediate with substrate of the active site. Ile208 is a pyruvate binding site.

This sequence belongs to the DapA family. As to quaternary structure, homotetramer; dimer of dimers.

The protein resides in the cytoplasm. The catalysed reaction is L-aspartate 4-semialdehyde + pyruvate = (2S,4S)-4-hydroxy-2,3,4,5-tetrahydrodipicolinate + H2O + H(+). Its pathway is amino-acid biosynthesis; L-lysine biosynthesis via DAP pathway; (S)-tetrahydrodipicolinate from L-aspartate: step 3/4. Catalyzes the condensation of (S)-aspartate-beta-semialdehyde [(S)-ASA] and pyruvate to 4-hydroxy-tetrahydrodipicolinate (HTPA). This Methanopyrus kandleri (strain AV19 / DSM 6324 / JCM 9639 / NBRC 100938) protein is 4-hydroxy-tetrahydrodipicolinate synthase.